The following is a 650-amino-acid chain: Putative pumilio homolog 7, chloroplastic (650 aa).

Disordered regions lie at residues 1 to 22 and 200 to 235; these read MDEF…RTPL and NDDK…GQEI. Residues 1–77 constitute a chloroplast transit peptide; sequence MDEFREASSV…SPPFNGIIPK (77 aa). 2 stretches are compositionally biased toward low complexity: residues 8-22 and 217-232; these read SSVS…RTPL and PSYS…YNNG. The 343-residue stretch at 308–650 folds into the PUM-HD domain; sequence SNTRALMSNN…RIFSRNLLKK (343 aa). Pumilio repeat units lie at residues 333-368, 369-404, 408-443, 445-480, 481-516, 517-552, 553-591, and 594-625; these read DIQG…IIFN, EVIA…QIVL, EEPG…SLVK, ALRP…FIFD, AATK…KLIA, EISR…MMLA, QLKG…ELVS, and HFDQ…SLVE.

Its subcellular location is the plastid. It localises to the chloroplast. The protein resides in the cytoplasm. Its function is as follows. Sequence-specific RNA-binding protein that regulates translation and mRNA stability by binding the 3'-UTR of target mRNAs. The chain is Putative pumilio homolog 7, chloroplastic (APUM7) from Arabidopsis thaliana (Mouse-ear cress).